A 48-amino-acid polypeptide reads, in one-letter code: DNA-directed RNA polymerase subunit Rpo12 (48 aa).

Cys-6, Cys-9, Cys-26, and Cys-29 together coordinate Zn(2+).

The protein belongs to the archaeal Rpo12/eukaryotic RPC10 RNA polymerase subunit family. Part of the 13-subunit RNA polymerase. Requires Zn(2+) as cofactor.

It is found in the cytoplasm. The enzyme catalyses RNA(n) + a ribonucleoside 5'-triphosphate = RNA(n+1) + diphosphate. In terms of biological role, DNA-dependent RNA polymerase (RNAP) catalyzes the transcription of DNA into RNA using the four ribonucleoside triphosphates as substrates. The polypeptide is DNA-directed RNA polymerase subunit Rpo12 (Sulfolobus acidocaldarius (strain ATCC 33909 / DSM 639 / JCM 8929 / NBRC 15157 / NCIMB 11770)).